The chain runs to 72 residues: Large ribosomal subunit protein bL31 (72 aa).

Cys-16, Cys-18, Cys-38, and Cys-41 together coordinate Zn(2+).

The protein belongs to the bacterial ribosomal protein bL31 family. Type A subfamily. Part of the 50S ribosomal subunit. It depends on Zn(2+) as a cofactor.

Its function is as follows. Binds the 23S rRNA. This Aromatoleum aromaticum (strain DSM 19018 / LMG 30748 / EbN1) (Azoarcus sp. (strain EbN1)) protein is Large ribosomal subunit protein bL31.